We begin with the raw amino-acid sequence, 1000 residues long: MSSGNPFDNGNPNDGNKSPSIDELYSPSESLARDGDDNNNNNNNNNNNNNNNNNNNNSSVSEKKKSKKKVRIQEEERLTESYDDDGDDEERRAYIENEEGEEEETEDGIILQPIVRDHSTYRPKNLYGSSDDIREGDSFGAKVSKTFGKTNKKIKQKIGESNKKIETRVKHSNKAIEEGWKTIAQTTMKPVDNIREQHHRRAEQHEVAERAVWFKDKLQIQKYECLDYVTIYNKAHRNELYKNFSKLASDHEVLRWIVSLFMGIFIGVIAYFSHACVSNITKYKFKFVEAVLELDLFLAFLTYFLLNTLLATCSSLLAVYYEPTAAGSGIPEVKGYLNGTKIPHTLKMKTLWTKFLSMVLAVSSGLQAGSEGPMIHIGAIVGNGFSQAQSKEFGFKIPFLRSFRNDKDKRDFVTSGAGAGVAAAFSAPLGGTLFSLEEVSSFWSIALTWRAFFCCMVATYTMNVLQSNSGSLTGLIIFNTGIGDKESYNWFEIIPFLLIGVLGGLGGALFTWINVKVTEFRREKINKIKSLRVLEVFLIIGLSTCIQFFLPLFFSCQNTAPFIPSVGNSTLTDVTLTNGAFYNSTIINGTFYNSTIANGTIYNSKFYNSSIYNSTITNGTGVSYDPAETLKELSEFKRFNCKEGWYNPMATLIFASYEESITNLLKVNSNNVTNTERLGLWPMFLFCIFYLFFAAYTAGCAVATGTLVPMLVIGASYGRFVGLVVYHILGDKVSIDPGIYAVMGAAAFMGGVSRLTISLTVILIEITDRLKYLLPLMLTVMTAKWVADALIHPLFDLLMQMKYIPYLELDQSKEMKLMMCKHIMAKKPVYLAEKDTLGNLRVLKETRHNGFPVVNNDEEKLVKGLILRTQLLMILERISDVYIPNSEAIYSHIEYTTKLTWKLPSVNDFNFDPADYSQEIDLSDVMNLTVITVNVEFAVSEAFQLFRTMGLRHMPVVNENNKLKGIITKKDLLEKTCEQRYRELNHMKLGIDQLIHVGDE.

Low complexity-rich tracts occupy residues 1 to 16 (MSSG…NDGN) and 38 to 60 (NNNN…NSSV). A disordered region spans residues 1–90 (MSSGNPFDNG…SYDDDGDDEE (90 aa)). Residues 1–256 (MSSGNPFDNG…LASDHEVLRW (256 aa)) lie on the Cytoplasmic side of the membrane. Basic and acidic residues predominate over residues 71–80 (RIQEEERLTE). A run of 10 helical transmembrane segments spans residues 257–277 (IVSL…HACV), 290–310 (AVLE…NTLL), 416–436 (GAGA…LFSL), 442–462 (FWSI…TYTM), 493–513 (IIPF…FTWI), 534–554 (LEVF…PLFF), 678–698 (LGLW…AYTA), 710–730 (MLVI…HILG), 733–753 (VSID…GGVS), and 772–792 (YLLP…ALIH). 2 CBS domains span residues 824 to 881 (MAKK…ISDV) and 926 to 984 (MNLT…YREL).

This sequence belongs to the chloride channel (TC 2.A.49) family.

The protein localises to the membrane. Voltage-gated chloride channel. Chloride channels may have several functions including the regulation of cell volume, membrane potential stabilization and signal transduction. Required for normal aggregation. This Dictyostelium discoideum (Social amoeba) protein is Chloride channel protein D (clcD).